The sequence spans 348 residues: Dihydroorotate dehydrogenase (quinone) (348 aa).

FMN contacts are provided by residues 65–69 (AGLDK) and Thr-89. Residue Lys-69 coordinates substrate. 114-118 (NRLGF) lines the substrate pocket. Residues Asn-147 and Asn-180 each contribute to the FMN site. Asn-180 provides a ligand contact to substrate. Ser-183 (nucleophile) is an active-site residue. Substrate is bound at residue Asn-185. FMN is bound by residues Lys-225 and Thr-253. 254–255 (NT) is a substrate binding site. FMN is bound by residues Gly-276, Gly-305, and 326 to 327 (YS).

It belongs to the dihydroorotate dehydrogenase family. Type 2 subfamily. In terms of assembly, monomer. It depends on FMN as a cofactor.

The protein resides in the cell membrane. The catalysed reaction is (S)-dihydroorotate + a quinone = orotate + a quinol. Its pathway is pyrimidine metabolism; UMP biosynthesis via de novo pathway; orotate from (S)-dihydroorotate (quinone route): step 1/1. Catalyzes the conversion of dihydroorotate to orotate with quinone as electron acceptor. This Delftia acidovorans (strain DSM 14801 / SPH-1) protein is Dihydroorotate dehydrogenase (quinone).